Here is a 327-residue protein sequence, read N- to C-terminus: DNA gyrase subunit A (327 aa).

A Topo IIA-type catalytic domain is found at 1–327 (RPDRSHAKSA…GMATNIPPHN (327 aa)). Tyr-65 (O-(5'-phospho-DNA)-tyrosine intermediate) is an active-site residue.

This sequence belongs to the type II topoisomerase GyrA/ParC subunit family. As to quaternary structure, heterotetramer, composed of two GyrA and two GyrB chains. In the heterotetramer, GyrA contains the active site tyrosine that forms a transient covalent intermediate with DNA, while GyrB binds cofactors and catalyzes ATP hydrolysis. Post-translationally, this protein undergoes a protein self splicing that involves a post-translational excision of the intervening region (intein) followed by peptide ligation.

The protein resides in the cytoplasm. It carries out the reaction ATP-dependent breakage, passage and rejoining of double-stranded DNA.. A type II topoisomerase that negatively supercoils closed circular double-stranded (ds) DNA in an ATP-dependent manner to modulate DNA topology and maintain chromosomes in an underwound state. Negative supercoiling favors strand separation, and DNA replication, transcription, recombination and repair, all of which involve strand separation. Also able to catalyze the interconversion of other topological isomers of dsDNA rings, including catenanes and knotted rings. Type II topoisomerases break and join 2 DNA strands simultaneously in an ATP-dependent manner. The protein is DNA gyrase subunit A (gyrA) of Mycobacterium xenopi.